The primary structure comprises 185 residues: Shikimate kinase (185 aa).

Position 21 to 26 (21 to 26 (GVGKTT)) interacts with ATP. Thr-25 is a Mg(2+) binding site. Asp-43, Arg-67, and Gly-90 together coordinate substrate. Residue Arg-129 coordinates ATP. Arg-147 provides a ligand contact to substrate.

This sequence belongs to the shikimate kinase family. Monomer. The cofactor is Mg(2+).

Its subcellular location is the cytoplasm. The catalysed reaction is shikimate + ATP = 3-phosphoshikimate + ADP + H(+). The protein operates within metabolic intermediate biosynthesis; chorismate biosynthesis; chorismate from D-erythrose 4-phosphate and phosphoenolpyruvate: step 5/7. In terms of biological role, catalyzes the specific phosphorylation of the 3-hydroxyl group of shikimic acid using ATP as a cosubstrate. This chain is Shikimate kinase, found in Bacillus pumilus (strain SAFR-032).